The sequence spans 315 residues: Triosephosphate isomerase, chloroplastic (315 aa).

Residues 1 to 60 constitute a chloroplast transit peptide; that stretch reads MAATSLTAPPSFSGLRRISPKLDAAAVSSHQSFFHRVNSSTRLVSSSSSSHRSPRGVVAM. Asparagine 71 and lysine 73 together coordinate substrate. Histidine 155 (electrophile) is an active-site residue. Serine 178 is modified (phosphoserine). The active-site Proton acceptor is the glutamate 225.

It belongs to the triosephosphate isomerase family. Homodimer.

It localises to the plastid. The protein localises to the chloroplast. It catalyses the reaction D-glyceraldehyde 3-phosphate = dihydroxyacetone phosphate. Its pathway is carbohydrate biosynthesis; Calvin cycle. In Arabidopsis thaliana (Mouse-ear cress), this protein is Triosephosphate isomerase, chloroplastic (TIM).